A 248-amino-acid chain; its full sequence is MGIKVGVLGAKGRVGQTIVAAVNESDDLELVAEIGVDDDLSLLVDNGAEVVVDFTTPNAVMGNLEFCINNGISAVVGTTGFDDARLEQVRDWLEGKDNVGVLIAPNFAISAVLTMVFSKQAARFFESAEVIELHHPNKLDAPSGTAIHTAQGIAAARKEAGMDAQPDATEQALEGSRGASVDGIPVHAVRMSGMVAHEQVIFGTQGQTLTIKQDSYDRNSFAPGVLVGVRNIAQHPGLVVGLEHYLGL.

NAD(+) contacts are provided by residues glycine 9 to valine 14, glycine 77 to threonine 79, and alanine 104 to phenylalanine 107. Histidine 134 functions as the Proton donor/acceptor in the catalytic mechanism. Residue histidine 135 participates in (S)-2,3,4,5-tetrahydrodipicolinate binding. The active-site Proton donor is lysine 138. Residue glycine 144 to threonine 145 participates in (S)-2,3,4,5-tetrahydrodipicolinate binding.

Belongs to the DapB family.

Its subcellular location is the cytoplasm. The catalysed reaction is (S)-2,3,4,5-tetrahydrodipicolinate + NAD(+) + H2O = (2S,4S)-4-hydroxy-2,3,4,5-tetrahydrodipicolinate + NADH + H(+). It carries out the reaction (S)-2,3,4,5-tetrahydrodipicolinate + NADP(+) + H2O = (2S,4S)-4-hydroxy-2,3,4,5-tetrahydrodipicolinate + NADPH + H(+). It participates in amino-acid biosynthesis; L-lysine biosynthesis via DAP pathway; (S)-tetrahydrodipicolinate from L-aspartate: step 4/4. Its function is as follows. Catalyzes the conversion of 4-hydroxy-tetrahydrodipicolinate (HTPA) to tetrahydrodipicolinate. In Corynebacterium glutamicum (strain ATCC 13032 / DSM 20300 / JCM 1318 / BCRC 11384 / CCUG 27702 / LMG 3730 / NBRC 12168 / NCIMB 10025 / NRRL B-2784 / 534), this protein is 4-hydroxy-tetrahydrodipicolinate reductase.